The sequence spans 668 residues: MWPDDLYRIMCRGNYIEILSAITNYNLHKHGANQCENESIPFTAIHQALQLRQIDIVKELIQQNPKLIYVTDHRRNSTLHTICITPNVMDIVISLTVDCDIILDIKYASIILNKHKLGEACIHVLKEGISGNEISYNKINKSIEYMKLIKERIQQDELLIAEMLLKKGIDVNAKDVYCRTPIHYAAERGNTKMVNLLLSYGADVNIITLDDLSVLEYAVDSKNIDTIKAIIDNRSNINKNDLSLLKAIRNTDLETSLLLYDSGFSVNSIDVYKNTPLHYAVQAPSLSRLVPKLLERGIDVNAKNIKGETPLYLMAKNGYDTENIRTLIMRGADVNAADSLYITPLHQASTLDRYKDTVITLLELGANVNARDYCDKTPIHYAAVRNNVVIINTLLDYGADIEALSQKIGTVLHFALYGTNPYMSVKTLIDRGANVNSKNKYLSTPLHYACKKNCKPEVIKMLLDNGADVNAINIRNQYPLLIALEYHGIVNILLHYGAELRDSRVLHKSLNSNMFSFRYIIAHICIQDFIRHDIRSEVNPLREIIQSDDTFKSIWLSCKEELKDISKIRINMFYSLDIFVISKNMNLLHHLVNNPIIKEINTYYFYNYGDRLKTSISLASNRHKILEKSRSKLDEILDSSGWSKLPPDIKLSILEFIGNTELRKICNR.

12 ANK repeats span residues 40–69 (IPFT…KLIY), 144–173 (EYMK…DVNA), 177–206 (YCRT…DVNI), 210–239 (DDLS…NINK), 272–302 (YKNT…DVNA), 306–336 (KGET…DVNA), 340–370 (LYIT…NVNA), 374–403 (CDKT…DIEA), 407–437 (KIGT…NVNS), 441–471 (YLST…DVNA), 473–502 (NIRN…ELRD), and 571–602 (NMFY…EINT).

The sequence is that of Putative ankyrin repeat protein FPV244 from Vertebrata (FPV).